The following is a 338-amino-acid chain: Glyceraldehyde-3-phosphate dehydrogenase (338 aa).

NAD(+) contacts are provided by residues 13–14, aspartate 35, and arginine 80; that span reads RI. D-glyceraldehyde 3-phosphate is bound by residues 151–153, threonine 182, 211–212, and arginine 234; these read SCT and TG. Cysteine 152 serves as the catalytic Nucleophile. Asparagine 317 contributes to the NAD(+) binding site.

This sequence belongs to the glyceraldehyde-3-phosphate dehydrogenase family. As to quaternary structure, homotetramer.

It localises to the cytoplasm. The catalysed reaction is D-glyceraldehyde 3-phosphate + phosphate + NAD(+) = (2R)-3-phospho-glyceroyl phosphate + NADH + H(+). Its pathway is carbohydrate degradation; glycolysis; pyruvate from D-glyceraldehyde 3-phosphate: step 1/5. The protein is Glyceraldehyde-3-phosphate dehydrogenase (gpdA) of Aspergillus oryzae (strain ATCC 42149 / RIB 40) (Yellow koji mold).